The chain runs to 405 residues: Probable succinyl-diaminopimelate desuccinylase (405 aa).

Zn(2+) is bound at residue histidine 72. Aspartate 74 is an active-site residue. Aspartate 105 contacts Zn(2+). Glutamate 139 functions as the Proton acceptor in the catalytic mechanism. Residues glutamate 140, glutamate 165, and histidine 377 each contribute to the Zn(2+) site.

It belongs to the peptidase M20A family. The cofactor is Zn(2+). Co(2+) serves as cofactor.

It carries out the reaction N-succinyl-(2S,6S)-2,6-diaminopimelate + H2O = (2S,6S)-2,6-diaminopimelate + succinate. It functions in the pathway amino-acid biosynthesis; L-lysine biosynthesis via DAP pathway; LL-2,6-diaminopimelate from (S)-tetrahydrodipicolinate (succinylase route): step 3/3. The polypeptide is Probable succinyl-diaminopimelate desuccinylase (dapE) (Staphylococcus epidermidis (strain ATCC 12228 / FDA PCI 1200)).